The sequence spans 107 residues: Nucleoid-associated protein Lferr_1592 (107 aa).

Belongs to the YbaB/EbfC family. In terms of assembly, homodimer.

It localises to the cytoplasm. The protein resides in the nucleoid. Binds to DNA and alters its conformation. May be involved in regulation of gene expression, nucleoid organization and DNA protection. This chain is Nucleoid-associated protein Lferr_1592, found in Acidithiobacillus ferrooxidans (strain ATCC 53993 / BNL-5-31) (Leptospirillum ferrooxidans (ATCC 53993)).